The sequence spans 379 residues: UDP-4-amino-4-deoxy-L-arabinose--oxoglutarate aminotransferase (379 aa).

Lys183 is modified (N6-(pyridoxal phosphate)lysine).

This sequence belongs to the DegT/DnrJ/EryC1 family. ArnB subfamily. As to quaternary structure, homodimer. It depends on pyridoxal 5'-phosphate as a cofactor.

The catalysed reaction is UDP-4-amino-4-deoxy-beta-L-arabinose + 2-oxoglutarate = UDP-beta-L-threo-pentopyranos-4-ulose + L-glutamate. It functions in the pathway nucleotide-sugar biosynthesis; UDP-4-deoxy-4-formamido-beta-L-arabinose biosynthesis; UDP-4-deoxy-4-formamido-beta-L-arabinose from UDP-alpha-D-glucuronate: step 2/3. Its pathway is bacterial outer membrane biogenesis; lipopolysaccharide biosynthesis. Its function is as follows. Catalyzes the conversion of UDP-4-keto-arabinose (UDP-Ara4O) to UDP-4-amino-4-deoxy-L-arabinose (UDP-L-Ara4N). The modified arabinose is attached to lipid A and is required for resistance to polymyxin and cationic antimicrobial peptides. This chain is UDP-4-amino-4-deoxy-L-arabinose--oxoglutarate aminotransferase, found in Pseudomonas fluorescens (strain ATCC BAA-477 / NRRL B-23932 / Pf-5).